We begin with the raw amino-acid sequence, 133 residues long: Ribonuclease VapC1 (133 aa).

Mg(2+) is bound by residues D7 and D98.

The protein belongs to the PINc/VapC protein family. The cofactor is Mg(2+).

Its function is as follows. Toxic component of a type II toxin-antitoxin (TA) system. The cognate antitoxin is VapB1. This Mycobacterium tuberculosis (strain CDC 1551 / Oshkosh) protein is Ribonuclease VapC1.